Reading from the N-terminus, the 370-residue chain is (5-formylfuran-3-yl)methyl phosphate transaminase (370 aa).

Lys222 is modified (N6-(pyridoxal phosphate)lysine).

It belongs to the class-I pyridoxal-phosphate-dependent aminotransferase family. As to quaternary structure, homodimer. Pyridoxal 5'-phosphate serves as cofactor.

The protein resides in the cytoplasm. It carries out the reaction 4-(hydroxymethyl)-2-furancarboxaldehyde phosphate + L-alanine = [5-(aminomethyl)-3-furyl]methyl phosphate + pyruvate. The protein operates within cofactor biosynthesis; methanofuran biosynthesis. Its function is as follows. Catalyzes the transamination reaction between 4-(hydroxymethyl)-2-furancarboxaldehyde phosphate (4-HFC-P) and alanine to produce pyruvate and 5-(aminomethyl)-3-furanmethanol phosphate (F1-P), the precursor for the furan moiety in methanofuran. The polypeptide is (5-formylfuran-3-yl)methyl phosphate transaminase (Methanocaldococcus jannaschii (strain ATCC 43067 / DSM 2661 / JAL-1 / JCM 10045 / NBRC 100440) (Methanococcus jannaschii)).